The following is a 266-amino-acid chain: Regulatory protein RecX (266 aa).

Belongs to the RecX family.

It localises to the cytoplasm. Its function is as follows. Modulates RecA activity. The polypeptide is Regulatory protein RecX (Leuconostoc citreum (strain KM20)).